Consider the following 476-residue polypeptide: Glutamyl-tRNA(Gln) amidotransferase subunit A (476 aa).

Catalysis depends on charge relay system residues Lys-70 and Ser-145. The Acyl-ester intermediate role is filled by Ser-169.

The protein belongs to the amidase family. GatA subfamily. Heterotrimer of A, B and C subunits.

The enzyme catalyses L-glutamyl-tRNA(Gln) + L-glutamine + ATP + H2O = L-glutaminyl-tRNA(Gln) + L-glutamate + ADP + phosphate + H(+). Allows the formation of correctly charged Gln-tRNA(Gln) through the transamidation of misacylated Glu-tRNA(Gln) in organisms which lack glutaminyl-tRNA synthetase. The reaction takes place in the presence of glutamine and ATP through an activated gamma-phospho-Glu-tRNA(Gln). The polypeptide is Glutamyl-tRNA(Gln) amidotransferase subunit A (Methanosarcina acetivorans (strain ATCC 35395 / DSM 2834 / JCM 12185 / C2A)).